Here is a 491-residue protein sequence, read N- to C-terminus: MNFIQDLRLLLKSRYPIILINTREEERLEYIIKNQLFCLDNEKVYCWDFVDGYTSNPNDNGYAKRNPLLALEFIEKLDTPYLNLFILKDFDSFFNDLGLIRKLRNLSQIIKTQSKNIIIVSCKVNIPYTLSDVITIVDLPLPNLSEIKKEITRLSIALGIVLDIELVNNLAKSCQGLSVERIRKTITKTIAQYGQLDSRSLPIIIEEKRQLINQTRLLEFYPYKKATEDIGGLDALKSWLKKRSRSFSKQSFNYGIPTPKGLLLVGIQGTGKSLTAKAIANDWTLPLLRLDIGKLFGGLVGESESRMREMVTIAEGLSPCVLWIDEIDKAFSNLYSQGDSGTSARVFGTFITWLSEKTTPVFVVATANTIQNLPSEMLRKGRFDEIFFLDLPNNEERELIFQIHLARIRPKSWQNYNIKQLSLLCNKFSGAEIEQAIVESMHTAFSEEREFSTEDIKIALEQFIPLAYTDKEQVESLQAWAGNGRARNASL.

Residue 266–273 (GIQGTGKS) participates in ATP binding.

It belongs to the AAA ATPase family. Highly divergent.

The protein resides in the plastid. It is found in the chloroplast. This is an uncharacterized protein from Porphyra purpurea (Red seaweed).